Here is a 156-residue protein sequence, read N- to C-terminus: ATP synthase subunit b (156 aa).

The chain crosses the membrane as a helical span at residues 7–27 (LIGQLIAFAIFVWFCMKYVWP).

Belongs to the ATPase B chain family. In terms of assembly, F-type ATPases have 2 components, F(1) - the catalytic core - and F(0) - the membrane proton channel. F(1) has five subunits: alpha(3), beta(3), gamma(1), delta(1), epsilon(1). F(0) has three main subunits: a(1), b(2) and c(10-14). The alpha and beta chains form an alternating ring which encloses part of the gamma chain. F(1) is attached to F(0) by a central stalk formed by the gamma and epsilon chains, while a peripheral stalk is formed by the delta and b chains.

The protein localises to the cell inner membrane. In terms of biological role, f(1)F(0) ATP synthase produces ATP from ADP in the presence of a proton or sodium gradient. F-type ATPases consist of two structural domains, F(1) containing the extramembraneous catalytic core and F(0) containing the membrane proton channel, linked together by a central stalk and a peripheral stalk. During catalysis, ATP synthesis in the catalytic domain of F(1) is coupled via a rotary mechanism of the central stalk subunits to proton translocation. Component of the F(0) channel, it forms part of the peripheral stalk, linking F(1) to F(0). This Histophilus somni (strain 129Pt) (Haemophilus somnus) protein is ATP synthase subunit b.